The following is a 166-amino-acid chain: Packaging efficiency factor P6 (166 aa).

Residues 134 to 166 (ILPESAGDQQEAEPVPSVGDQQETAPRKRFRAI) form a disordered region.

In terms of assembly, heterodimer of P6 and P9; further multimerizes as hexamers of heterodimers. Part of the dodecameric portal complex that is composed of the packaging efficiency factor P6, the DNA packaging ATPase P9, and the internal heterododecamer P20/P22 which spans the virion inner membrane.

It is found in the virion. Together with the packaging ATPase P9, forms the external part of the portal vertex that is embeded in the capsid and which plays critical roles in genome packaging and genome ejection. Both proteins multimerize as a single ring-shaped heterdodecamer arranged around a central channel. The chain is Packaging efficiency factor P6 (VI) from Acinetobacter calcoaceticus (Arthrobacter siderocapsulatus).